The following is a 461-amino-acid chain: E3 ubiquitin-protein ligase TRIM15 (461 aa).

The RING-type zinc finger occupies 12-57 (CSDCQGRLEDAVTAACGHTFCRLCLPLPPQMGAQPSSRVLLCPVCQ). The B box-type zinc finger occupies 74–115 (LGETYCEEHGEKIYFFCENDAEFLCVFCREGPSHQAHAVGFL). Zn(2+) is bound by residues cysteine 79, histidine 82, cysteine 101, and histidine 107. Residues 123 to 230 (RDRLRGRLEA…EKCQQPASEL (108 aa)) adopt a coiled-coil conformation. A B30.2/SPRY domain is found at 272-461 (EMLRAFSENL…KKGSCLTLKG (190 aa)).

The protein belongs to the TRIM/RBCC family. Interacts with paxillin/PXN; this interaction recruits TRIM15 to focal adhesions. Interacts with TRIM8; this interaction prevents TRIM8 cytoplasmic translocation.

Its subcellular location is the cytoplasm. The protein resides in the nucleus. The protein localises to the cell junction. It is found in the focal adhesion. It catalyses the reaction S-ubiquitinyl-[E2 ubiquitin-conjugating enzyme]-L-cysteine + [acceptor protein]-L-lysine = [E2 ubiquitin-conjugating enzyme]-L-cysteine + N(6)-ubiquitinyl-[acceptor protein]-L-lysine.. E3 ubiquitin ligase that plays a role in several processes including innate antiviral immnity, cell migration and chemotaxis. Acts as a 'Lys-63'-specific ubiquitin ligase for MAPK1/ERK2 and MAPK3/ERK1, promoting their activation by facilitating their interaction with MAP2K1 and MAP2K2. Also plays a role in cell migration and chemotaxis by acting as a stable focal adhesion component upon recruitment by multi-adapter protein paxillin/PXN. Functions in the RIGI-mediated interferon induction pathway upstream or at the level of MAVS. Inhibits NF-kappa-B activation by turnover of 'Lys-63'-linked ubiquitination of MAP3K7/TAK1. Mechanistically, prevents TRIM8 cytoplasmic translocation and thus inhibits TRIM8-mediated 'Lys-63'-linked polyubiquitination of MAP3K7/TAK1 in the cytoplasm. Also has an important regulatory effect on the activation of hepatic stellate cells (HSCs). The sequence is that of E3 ubiquitin-protein ligase TRIM15 (TRIM15) from Sus scrofa (Pig).